A 79-amino-acid polypeptide reads, in one-letter code: MIDSLTTLMIYFFLPVSYLLVGFVIMYYTREAFKKHMLENMVSPMWQNYVFVMILLIWPFFLFLVVTTTILKLFKAVVN.

2 helical membrane-spanning segments follow: residues 8–28 (LMIYFFLPVSYLLVGFVIMYY) and 50–70 (VFVMILLIWPFFLFLVVTTTI).

Its subcellular location is the host membrane. The polypeptide is Putative transmembrane protein ORF17 (Haloarcula hispanica (His1V)).